We begin with the raw amino-acid sequence, 195 residues long: Recombination protein RecR (195 aa).

The C4-type zinc finger occupies 56–71; it reads CRQCHSFSDDDICPIC. Positions 79 to 174 constitute a Toprim domain; it reads SVLCVVETAA…KVTRIAQGIP (96 aa).

The protein belongs to the RecR family.

In terms of biological role, may play a role in DNA repair. It seems to be involved in an RecBC-independent recombinational process of DNA repair. It may act with RecF and RecO. The chain is Recombination protein RecR from Psychrobacter sp. (strain PRwf-1).